Consider the following 181-residue polypeptide: MTASPLVTADQGAVAAPDQAFFDSLNAEVNDKGFLVTSTEELFQWARTGSLWWMTFGLACCAVEMIHVNMPRYDMERFGVAPRASPRQSDVMIVAGTLCNKMAPALRKVYDQMSDPKYVISMGSCANGGGYYHYSYSVVRGCDRIVPVDIYVPGCPPTAEALLYGVMQLQRKIRRAGTLER.

Residues Cys-60, Cys-61, Cys-125, and Cys-155 each contribute to the [4Fe-4S] cluster site.

Belongs to the complex I 20 kDa subunit family. As to quaternary structure, NDH-1 is composed of 14 different subunits. Subunits NuoB, C, D, E, F, and G constitute the peripheral sector of the complex. Requires [4Fe-4S] cluster as cofactor.

It localises to the cell inner membrane. It catalyses the reaction a quinone + NADH + 5 H(+)(in) = a quinol + NAD(+) + 4 H(+)(out). Functionally, NDH-1 shuttles electrons from NADH, via FMN and iron-sulfur (Fe-S) centers, to quinones in the respiratory chain. Couples the redox reaction to proton translocation (for every two electrons transferred, four hydrogen ions are translocated across the cytoplasmic membrane), and thus conserves the redox energy in a proton gradient. This chain is NADH-quinone oxidoreductase subunit B, found in Novosphingobium aromaticivorans (strain ATCC 700278 / DSM 12444 / CCUG 56034 / CIP 105152 / NBRC 16084 / F199).